The chain runs to 127 residues: UPF0166 protein PH1503 (127 aa).

The protein belongs to the UPF0166 family.

In Pyrococcus horikoshii (strain ATCC 700860 / DSM 12428 / JCM 9974 / NBRC 100139 / OT-3), this protein is UPF0166 protein PH1503.